The following is a 336-amino-acid chain: MGNVLAASSPAPPPAGSPPVPGLVSVPPGFTMPPVAGLTPTPDKKEPQEERLPNPGTFEECHRKCKELFPIQMEGVKLIVNKGLSNYFQVNHTISLSTIGESNYHFGATYVGTKQLGPAEAFPVLVGDFDNSGSLNGQIIHQVTNNIRSKIALQTQQSKFVNWQLDTEYRGEDYTASVTLGNPDILVGSGILVAHYLQSITPSLALGGELVYHRRPGEEGTVMSLAGRYTAPSWTATLTLGQAGAHATYYHKANDQLQLGVEFEASARMQDTSVSLGYQLDLPKANLLFKGSIDSNWIVGATLEKKLPPLPLTLAMGAFLNHKKNKFQCGFGLTIG.

Positions 1 to 58 (MGNVLAASSPAPPPAGSPPVPGLVSVPPGFTMPPVAGLTPTPDKKEPQEERLPNPGTF) are disordered. Over residues 10 to 21 (PAPPPAGSPPVP) the composition is skewed to pro residues. Positions 42–52 (PDKKEPQEERL) are enriched in basic and acidic residues.

It belongs to the Tom40 family. Forms part of the preprotein translocase complex of the outer mitochondrial membrane (TOM complex). Interacts with mitochondrial targeting sequences.

The protein localises to the mitochondrion outer membrane. In terms of biological role, channel-forming protein essential for import of protein precursors into mitochondria. This Xenopus laevis (African clawed frog) protein is Mitochondrial import receptor subunit TOM40 homolog (tomm40).